A 116-amino-acid polypeptide reads, in one-letter code: HTH-type transcriptional regulator AnsR (116 aa).

Positions 6 to 60 (LTELRKKKNWSLQYTADLLGIAKSTYAGYESGYRRPSLEALAMLADLFDTTCDEL) constitute an HTH cro/C1-type domain. Residues 17–36 (LQYTADLLGIAKSTYAGYES) constitute a DNA-binding region (H-T-H motif).

In terms of biological role, transcriptional repressor for the ans operon coding for L-asparaginase and L-aspartase. NH4(+) may influence this repression. The chain is HTH-type transcriptional regulator AnsR (ansR) from Bacillus subtilis (strain 168).